We begin with the raw amino-acid sequence, 153 residues long: Small ribosomal subunit protein eS19 (153 aa).

Disordered stretches follow at residues 77–99 and 113–139; these read YGTS…KGSG and GYVE…TAGD. The span at 120–133 shows a compositional bias: basic and acidic residues; sequence NDGRRVTGDGRSLL.

The protein belongs to the eukaryotic ribosomal protein eS19 family. As to quaternary structure, part of the 30S ribosomal subunit.

Its function is as follows. May be involved in maturation of the 30S ribosomal subunit. The chain is Small ribosomal subunit protein eS19 from Haloarcula marismortui (strain ATCC 43049 / DSM 3752 / JCM 8966 / VKM B-1809) (Halobacterium marismortui).